Here is a 274-residue protein sequence, read N- to C-terminus: Light-independent protochlorophyllide reductase iron-sulfur ATP-binding protein (274 aa).

Residues 12–17 (GIGKST) and K41 each bind ATP. S16 contacts Mg(2+). 2 residues coordinate [4Fe-4S] cluster: C97 and C131.

Belongs to the NifH/BchL/ChlL family. Homodimer. Protochlorophyllide reductase is composed of three subunits; BchL, BchN and BchB. It depends on [4Fe-4S] cluster as a cofactor.

The catalysed reaction is chlorophyllide a + oxidized 2[4Fe-4S]-[ferredoxin] + 2 ADP + 2 phosphate = protochlorophyllide a + reduced 2[4Fe-4S]-[ferredoxin] + 2 ATP + 2 H2O. Its pathway is porphyrin-containing compound metabolism; bacteriochlorophyll biosynthesis (light-independent). Its function is as follows. Component of the dark-operative protochlorophyllide reductase (DPOR) that uses Mg-ATP and reduced ferredoxin to reduce ring D of protochlorophyllide (Pchlide) to form chlorophyllide a (Chlide). This reaction is light-independent. The L component serves as a unique electron donor to the NB-component of the complex, and binds Mg-ATP. This is Light-independent protochlorophyllide reductase iron-sulfur ATP-binding protein from Chloroherpeton thalassium (strain ATCC 35110 / GB-78).